A 263-amino-acid chain; its full sequence is MLPCFQLLRIGGGRGGDLYTFHPPSKSGCTYGLGCRADLCDVALRPQQEPGLISGVHAELHAELQGDDWRVSLEDHSSQGTLVNNVRLPRGHRLELSDGDLLTFGPQGQAGTSSSSEFYFMFQQVRVKPQDFAAITVPRSKGEAGGGFQPMLPPQGAPQRPLSTLSSAPKATLILNSIGSLSKLQAQPLTFSRGGGRPQGLAIPSQHGEAQVSPAPPTRNRRKSAHKVLAELDDEVSPGPLSVLTEPRKRLRVEKAALIASGE.

Positions 31 to 88 (YGLGCRADLCDVALRPQQEPGLISGVHAELHAELQGDDWRVSLEDHSSQGTLVNNVRL) constitute an FHA domain. Serine 78 is subject to Phosphoserine. Disordered regions lie at residues 140–164 (SKGEAGGGFQPMLPPQGAPQRPLST) and 189–225 (LTFSRGGGRPQGLAIPSQHGEAQVSPAPPTRNRRKSA).

It localises to the nucleus. In terms of biological role, potential transcription factor that may play a role in the regulation of genes involved in cell cycle G1/S transition. May bind to regulatory elements of genes, including the promoter of the transcription factor FOXO1. This is Transcription factor 19-like protein (Tcf19) from Mus musculus (Mouse).